Consider the following 348-residue polypeptide: Guanine nucleotide-binding protein alpha-13 subunit (348 aa).

Residue Gly-2 is the site of N-myristoyl glycine attachment. Cys-3 carries the S-palmitoyl cysteine lipid modification. The region spanning 34 to 348 is the G-alpha domain; it reads SHIRLLLLGS…VFKDIAKRKK (315 aa). Residues 37-50 are G1 motif; that stretch reads RLLLLGSAESGKTT. Residues 42–49, 176–182, 201–205, 270–273, and Ala-326 contribute to the GTP site; these read GSAESGKT, IMAYVPT, DIGGQ, and NEID. Residues 174 to 182 are G2 motif; it reads DLIMAYVPT. Thr-182 is a Mg(2+) binding site. The tract at residues 197 to 206 is G3 motif; sequence FQLFDIGGQK. Residues 266-273 form a G4 motif region; that stretch reads YLFLNEID. The segment at 324–329 is G5 motif; it reads CIAIDT.

The protein belongs to the G-alpha family. G proteins are composed of 3 units; alpha, beta and gamma. The alpha chain contains the guanine nucleotide binding site.

Functionally, guanine nucleotide-binding proteins (G proteins) are involved as modulators or transducers in various transmembrane signaling systems. The sequence is that of Guanine nucleotide-binding protein alpha-13 subunit (gpa-13) from Caenorhabditis elegans.